Reading from the N-terminus, the 78-residue chain is MSTIEERVKKIIVEQLGVKQEEVVNNASFVDDLGADSLDTVELVMALEEEFDTEIPDEEAEKITTVQAAIDFIQANQQ.

Positions 2–77 (STIEERVKKI…AAIDFIQANQ (76 aa)) constitute a Carrier domain. Ser-37 carries the O-(pantetheine 4'-phosphoryl)serine modification.

Belongs to the acyl carrier protein (ACP) family. In terms of processing, 4'-phosphopantetheine is transferred from CoA to a specific serine of apo-ACP by AcpS. This modification is essential for activity because fatty acids are bound in thioester linkage to the sulfhydryl of the prosthetic group.

It is found in the cytoplasm. It participates in lipid metabolism; fatty acid biosynthesis. Carrier of the growing fatty acid chain in fatty acid biosynthesis. This Pectobacterium atrosepticum (strain SCRI 1043 / ATCC BAA-672) (Erwinia carotovora subsp. atroseptica) protein is Acyl carrier protein.